The chain runs to 706 residues: UvrABC system protein C (706 aa).

In terms of domain architecture, GIY-YIG spans 16 to 95 (VEPGVYRFRD…IKEFDPRFNV (80 aa)). The UVR domain maps to 208–243 (DRLAKDMEQQMTAAAEQLDFERAARLRDDISALKRA). The interval 651-706 (APQNGTAPDPAPGTGDPQTPADPHSAATAADIEDDRHATGATGPQMNGSEQQVDRV) is disordered. The segment covering 692–706 (TGPQMNGSEQQVDRV) has biased composition (polar residues).

The protein belongs to the UvrC family. Interacts with UvrB in an incision complex.

It localises to the cytoplasm. The UvrABC repair system catalyzes the recognition and processing of DNA lesions. UvrC both incises the 5' and 3' sides of the lesion. The N-terminal half is responsible for the 3' incision and the C-terminal half is responsible for the 5' incision. The chain is UvrABC system protein C from Mycolicibacterium smegmatis (strain ATCC 700084 / mc(2)155) (Mycobacterium smegmatis).